Reading from the N-terminus, the 347-residue chain is Ferrochelatase (347 aa).

Fe cation-binding residues include histidine 193 and glutamate 273.

Belongs to the ferrochelatase family.

It is found in the cytoplasm. It carries out the reaction heme b + 2 H(+) = protoporphyrin IX + Fe(2+). It participates in porphyrin-containing compound metabolism; protoheme biosynthesis; protoheme from protoporphyrin-IX: step 1/1. Catalyzes the ferrous insertion into protoporphyrin IX. The chain is Ferrochelatase from Rickettsia canadensis (strain McKiel).